The primary structure comprises 267 residues: Orotidine 5'-phosphate decarboxylase (267 aa).

The active-site Proton donor is Lys-93.

Belongs to the OMP decarboxylase family. Type 2 subfamily.

The enzyme catalyses orotidine 5'-phosphate + H(+) = UMP + CO2. It participates in pyrimidine metabolism; UMP biosynthesis via de novo pathway; UMP from orotate: step 2/2. The chain is Orotidine 5'-phosphate decarboxylase from Herpetosiphon aurantiacus (strain ATCC 23779 / DSM 785 / 114-95).